The chain runs to 296 residues: dTDP-rhamnosyl transferase RfbF (296 aa).

The protein belongs to the glycosyltransferase 2 family.

It participates in bacterial outer membrane biogenesis; lipopolysaccharide biosynthesis. The protein is dTDP-rhamnosyl transferase RfbF (rfbF) of Shigella flexneri.